Here is a 104-residue protein sequence, read N- to C-terminus: Small ribosomal subunit protein uS10 (104 aa).

This sequence belongs to the universal ribosomal protein uS10 family. As to quaternary structure, part of the 30S ribosomal subunit.

Functionally, involved in the binding of tRNA to the ribosomes. This is Small ribosomal subunit protein uS10 from Thermoplasma acidophilum (strain ATCC 25905 / DSM 1728 / JCM 9062 / NBRC 15155 / AMRC-C165).